An 860-amino-acid polypeptide reads, in one-letter code: DNA mismatch repair protein MutS (860 aa).

607-614 (GPNMSGKS) is an ATP binding site.

Belongs to the DNA mismatch repair MutS family.

This protein is involved in the repair of mismatches in DNA. It is possible that it carries out the mismatch recognition step. This protein has a weak ATPase activity. The chain is DNA mismatch repair protein MutS from Listeria innocua serovar 6a (strain ATCC BAA-680 / CLIP 11262).